Consider the following 668-residue polypeptide: DNA ligase (668 aa).

Residues 37–41, 86–87, and Glu-116 contribute to the NAD(+) site; these read DNVYD and SM. The N6-AMP-lysine intermediate role is filled by Lys-118. NAD(+)-binding residues include Arg-139, Glu-173, Lys-288, and Lys-312. Cys-406, Cys-409, Cys-424, and Cys-429 together coordinate Zn(2+). The 78-residue stretch at 591–668 folds into the BRCT domain; it reads APDNPFKDKT…TEEEAIAQIE (78 aa).

This sequence belongs to the NAD-dependent DNA ligase family. LigA subfamily. Mg(2+) is required as a cofactor. Mn(2+) serves as cofactor.

It carries out the reaction NAD(+) + (deoxyribonucleotide)n-3'-hydroxyl + 5'-phospho-(deoxyribonucleotide)m = (deoxyribonucleotide)n+m + AMP + beta-nicotinamide D-nucleotide.. DNA ligase that catalyzes the formation of phosphodiester linkages between 5'-phosphoryl and 3'-hydroxyl groups in double-stranded DNA using NAD as a coenzyme and as the energy source for the reaction. It is essential for DNA replication and repair of damaged DNA. This is DNA ligase from Lactobacillus helveticus (strain DPC 4571).